The following is a 206-amino-acid chain: Ribonuclease HII (206 aa).

The RNase H type-2 domain occupies 18-206; that stretch reads LRIAGVDEVG…PVHNILYQEK (189 aa). Residues Asp24, Glu25, and Asp115 each coordinate a divalent metal cation.

It belongs to the RNase HII family. The cofactor is Mn(2+). Mg(2+) serves as cofactor.

The protein localises to the cytoplasm. It carries out the reaction Endonucleolytic cleavage to 5'-phosphomonoester.. Functionally, endonuclease that specifically degrades the RNA of RNA-DNA hybrids. The chain is Ribonuclease HII from Dinoroseobacter shibae (strain DSM 16493 / NCIMB 14021 / DFL 12).